We begin with the raw amino-acid sequence, 277 residues long: Large ribosomal subunit protein uL2 (277 aa).

The tract at residues 223 to 277 (VVMNPIDHPHGGGEGRTSGGRHPVTPWGKPTKGKKTRSNKSTNKFILISRHKRKK) is disordered.

The protein belongs to the universal ribosomal protein uL2 family. Part of the 50S ribosomal subunit. Forms a bridge to the 30S subunit in the 70S ribosome.

Its function is as follows. One of the primary rRNA binding proteins. Required for association of the 30S and 50S subunits to form the 70S ribosome, for tRNA binding and peptide bond formation. It has been suggested to have peptidyltransferase activity; this is somewhat controversial. Makes several contacts with the 16S rRNA in the 70S ribosome. This chain is Large ribosomal subunit protein uL2, found in Nitrobacter hamburgensis (strain DSM 10229 / NCIMB 13809 / X14).